The primary structure comprises 305 residues: Catechol 1,2-dioxygenase (305 aa).

4 residues coordinate Fe cation: Tyr163, Tyr197, His221, and His223.

It belongs to the intradiol ring-cleavage dioxygenase family. As to quaternary structure, homodimer. Fe(3+) serves as cofactor.

It carries out the reaction catechol + O2 = cis,cis-muconate + 2 H(+). It functions in the pathway aromatic compound metabolism; beta-ketoadipate pathway; 5-oxo-4,5-dihydro-2-furylacetate from catechol: step 1/3. This Acinetobacter guillouiae (Acinetobacter genomosp. 11) protein is Catechol 1,2-dioxygenase (catA).